Consider the following 132-residue polypeptide: Large ribosomal subunit protein uL14 (132 aa).

It belongs to the universal ribosomal protein uL14 family. In terms of assembly, part of the 50S ribosomal subunit. Forms a cluster with proteins L3 and L24e, part of which may contact the 16S rRNA in 2 intersubunit bridges.

Its function is as follows. Binds to 23S rRNA. Forms part of two intersubunit bridges in the 70S ribosome. The polypeptide is Large ribosomal subunit protein uL14 (Methanosarcina barkeri (strain Fusaro / DSM 804)).